A 106-amino-acid chain; its full sequence is ATP-dependent Clp protease adapter protein ClpS (106 aa).

It belongs to the ClpS family. Binds to the N-terminal domain of the chaperone ClpA.

Involved in the modulation of the specificity of the ClpAP-mediated ATP-dependent protein degradation. This chain is ATP-dependent Clp protease adapter protein ClpS, found in Citrobacter koseri (strain ATCC BAA-895 / CDC 4225-83 / SGSC4696).